The primary structure comprises 286 residues: Transcription initiation factor IIA large subunit (286 aa).

Disordered stretches follow at residues 120 to 145 (NTVE…ADVT), 167 to 195 (TVEN…KEKE), and 208 to 236 (KRSA…EGEE). Residues 175 to 195 (SEKKDDEEKEEDVEKTRKEKE) show a composition bias toward basic and acidic residues. Acidic residues predominate over residues 214 to 236 (DTDEVGSELDDSDDDYLISEGEE).

The protein belongs to the TFIIA subunit 1 family. TFIIA is a heterodimer composed of the large TOA1 and a small TOA2 subunits. Interacts with KAP122.

It localises to the cytoplasm. It is found in the nucleus. Its function is as follows. TFIIA is a component of the transcription machinery of RNA polymerase II and implicated in the regulation of basal transcription. Interacts with TBP (the TATA-binding protein). The sequence is that of Transcription initiation factor IIA large subunit (TOA1) from Saccharomyces cerevisiae (strain ATCC 204508 / S288c) (Baker's yeast).